The primary structure comprises 275 residues: Intercellular adhesion molecule 2 (275 aa).

Positions 1–24 (MSSFGYRTLTVALFALICCPGSDE) are cleaved as a signal peptide. The Extracellular segment spans residues 25 to 223 (KVFEVHVRPK…EIYEPVSDSQ (199 aa)). The Ig-like C2-type 1 domain occupies 41–98 (KASLEVNCSTTCNQPEVGGLETSLDKILLDEQAQWKHYLVSNISHDTVLQCHFTCSGK). 7 N-linked (GlcNAc...) asparagine glycosylation sites follow: asparagine 47, asparagine 82, asparagine 105, asparagine 153, asparagine 158, asparagine 176, and asparagine 187. 2 disulfide bridges follow: cysteine 48-cysteine 91 and cysteine 52-cysteine 95. The region spanning 127 to 197 (GKSFTIECRV…FSCLAVLDLI (71 aa)) is the Ig-like C2-type 2 domain. A disulfide bond links cysteine 134 and cysteine 190. A helical membrane pass occupies residues 224-248 (MVIIVTVVSVLLSLFVTSVLLCFIF). At 249–275 (GQHLRQQRMGTYGVRAAWRRLPQAFRP) the chain is on the cytoplasmic side. The segment at 251-275 (HLRQQRMGTYGVRAAWRRLPQAFRP) is required for interaction with EZR, MSN and RDX and co-localization to microvilli.

This sequence belongs to the immunoglobulin superfamily. ICAM family. As to quaternary structure, interacts with RDX, EZR and MSN.

It localises to the membrane. It is found in the cell projection. The protein localises to the microvillus. Its function is as follows. ICAM proteins are ligands for the leukocyte adhesion protein LFA-1 (integrin alpha-L/beta-2). ICAM2 may play a role in lymphocyte recirculation by blocking LFA-1-dependent cell adhesion. It mediates adhesive interactions important for antigen-specific immune response, NK-cell mediated clearance, lymphocyte recirculation, and other cellular interactions important for immune response and surveillance. This is Intercellular adhesion molecule 2 (ICAM2) from Gorilla gorilla gorilla (Western lowland gorilla).